We begin with the raw amino-acid sequence, 574 residues long: E3 ubiquitin-protein ligase NEURL1 (574 aa).

The span at 1 to 18 shows a compositional bias: polar residues; sequence MGNNFSSVSSLQRGNPSR. Positions 1–53 are disordered; sequence MGNNFSSVSSLQRGNPSRASRGHPQNLKDSIGGSFPVPSHRCHHKQKHCPPTL. The N-myristoyl glycine moiety is linked to residue Gly-2. NHR domains lie at 61–217 and 292–447; these read TPLL…QLLD and GDLR…RILG. Residues 520–560 form an RING-type zinc finger; sequence ECTICYEHAVDTVIYTCGHMCLCYSCGLRLKKALHACCPIC.

As to quaternary structure, interacts with CPEB3 (via N-terminal domain); the interaction increases CPEB3 ubiquitination. Interacts with DLL1. In terms of processing, myristoylation is a determinant of membrane targeting. In terms of tissue distribution, expressed in CA1 pyramidal neurons (at protein level). Expressed throughout the adult forebrain, including the cerebral cortex, amygdala, striatum, and CA1 area of the hippocampus. Expressed in sensory neurons of the olfactory epithelium, the vomeronasal organ, mammary gland and skeletal muscle.

It is found in the cytoplasm. Its subcellular location is the perinuclear region. It localises to the cell membrane. The protein localises to the perikaryon. The protein resides in the cell projection. It is found in the dendrite. Its subcellular location is the postsynaptic density. It carries out the reaction S-ubiquitinyl-[E2 ubiquitin-conjugating enzyme]-L-cysteine + [acceptor protein]-L-lysine = [E2 ubiquitin-conjugating enzyme]-L-cysteine + N(6)-ubiquitinyl-[acceptor protein]-L-lysine.. It participates in protein modification; protein ubiquitination. Functionally, plays a role in hippocampal-dependent synaptic plasticity, learning and memory. Involved in the formation of spines and functional synaptic contacts by modulating the translational activity of the cytoplasmic polyadenylation element-binding protein CPEB3. Promotes ubiquitination of CPEB3, and hence induces CPEB3-dependent mRNA translation activation of glutamate receptor GRIA1 and GRIA2. Can function as an E3 ubiquitin-protein ligase to activate monoubiquitination of JAG1 (in vitro), thereby regulating the Notch pathway. Acts as a tumor suppressor; inhibits malignant cell transformation of medulloblastoma (MB) cells by inhibiting the Notch signaling pathway. The chain is E3 ubiquitin-protein ligase NEURL1 (Neurl1) from Mus musculus (Mouse).